Consider the following 803-residue polypeptide: Translation initiation factor IF-2 (803 aa).

Residues 65 to 75 (PDKVEEKKEHT) show a composition bias toward basic and acidic residues. The tract at residues 65–186 (PDKVEEKKEH…PKSRKSKTLK (122 aa)) is disordered. The span at 175-185 (NKPKSRKSKTL) shows a compositional bias: basic residues. In terms of domain architecture, tr-type G spans 300-468 (IRPPVVTIMG…ILLTADAALE (169 aa)). A G1 region spans residues 309 to 316 (GHVDHGKT). 309 to 316 (GHVDHGKT) lines the GTP pocket. The G2 stretch occupies residues 334–338 (GITQH). Positions 355–358 (DTPG) are G3. Residues 355–359 (DTPGH) and 409–412 (NKID) contribute to the GTP site. Residues 409–412 (NKID) form a G4 region. Positions 445–447 (SAK) are G5.

The protein belongs to the TRAFAC class translation factor GTPase superfamily. Classic translation factor GTPase family. IF-2 subfamily.

Its subcellular location is the cytoplasm. In terms of biological role, one of the essential components for the initiation of protein synthesis. Protects formylmethionyl-tRNA from spontaneous hydrolysis and promotes its binding to the 30S ribosomal subunits. Also involved in the hydrolysis of GTP during the formation of the 70S ribosomal complex. The protein is Translation initiation factor IF-2 of Tropheryma whipplei (strain TW08/27) (Whipple's bacillus).